Here is a 158-residue protein sequence, read N- to C-terminus: MDFRIGQGYDVHQLVPGRPLIIGGVTIPYERGLLGHSDADVLLHAITDALFGAAALGDIGRHFSDTDAAFKGADSRVLLRECAARVKAAGFTIQNVDSTVIAQAPKLAPHIDGMRANIAADLGLPLERVNVKAKTNEKLGYLGRGDGIEAQAAALLVK.

2 residues coordinate a divalent metal cation: Asp10 and His12. Residues 10-12 (DVH) and 36-37 (HS) contribute to the 4-CDP-2-C-methyl-D-erythritol 2-phosphate site. His44 lines the a divalent metal cation pocket. 4-CDP-2-C-methyl-D-erythritol 2-phosphate is bound by residues 58 to 60 (DIG), 63 to 67 (FSDTD), and Arg144.

This sequence belongs to the IspF family. As to quaternary structure, homotrimer. Requires a divalent metal cation as cofactor.

It catalyses the reaction 4-CDP-2-C-methyl-D-erythritol 2-phosphate = 2-C-methyl-D-erythritol 2,4-cyclic diphosphate + CMP. It participates in isoprenoid biosynthesis; isopentenyl diphosphate biosynthesis via DXP pathway; isopentenyl diphosphate from 1-deoxy-D-xylulose 5-phosphate: step 4/6. Involved in the biosynthesis of isopentenyl diphosphate (IPP) and dimethylallyl diphosphate (DMAPP), two major building blocks of isoprenoid compounds. Catalyzes the conversion of 4-diphosphocytidyl-2-C-methyl-D-erythritol 2-phosphate (CDP-ME2P) to 2-C-methyl-D-erythritol 2,4-cyclodiphosphate (ME-CPP) with a corresponding release of cytidine 5-monophosphate (CMP). This chain is 2-C-methyl-D-erythritol 2,4-cyclodiphosphate synthase, found in Burkholderia vietnamiensis (strain G4 / LMG 22486) (Burkholderia cepacia (strain R1808)).